Consider the following 197-residue polypeptide: uncharacterized protein (197 aa).

Residues I11–V31 traverse the membrane as a helical segment.

The protein localises to the membrane. This is an uncharacterized protein from Mycoplasma pneumoniae (strain ATCC 29342 / M129 / Subtype 1) (Mycoplasmoides pneumoniae).